We begin with the raw amino-acid sequence, 493 residues long: Vinyl phenol reductase (493 aa).

FAD contacts are provided by Ala19, Glu38, Ser46, Thr50, Gly52, Ala156, Asp224, Asn448, and Val467.

Belongs to the FAD-dependent oxidoreductase 2 family. FRD/SDH subfamily. FAD is required as a cofactor.

The catalysed reaction is 4-vinylphenol + NADH + H(+) = 4-ethylphenol + NAD(+). It carries out the reaction 3,4-dihydroxystyrene + NADH + H(+) = 4-ethylcatechol + NAD(+). It catalyses the reaction 2-methoxy-4-vinylphenol + NADH + H(+) = 4-ethyl-2-methoxyphenol + NAD(+). In terms of biological role, involved in the production of ethylphenols during the degradation of hydroxycinnamic acids. Catalyzes the reduction of vinylphenols (4-vinylphenol (4-hydroxystyrene), 4-vinylcatechol (3,4-dihydroxystyrene), and 4-vinylguaiacol (2-methoxy-4-vinylphenol)) to their corresponding ethylphenols (4-ethylphenol, 4-ethylcatechol, and 4-ethylguaiacol, respectively) in the presence of NADH. These compounds are considered the most important flavor components of fermented soy sauce, and, on the other hand, are considered off flavor and responsible for sensorial wine and cider alteration. The 4-ethylphenol produced by the gut bacteria L.plantarum strain WCFS1 can get subsequent sulfation to 4-ethylphenyl sulfate (4EPS) by host sulfotransferase (SULT1A1); 4EPS can enter the brain and seems to alter brain activity. Therefore, this enzyme likely plays a role in gut microbiota-host metabolic interactions. This Lactiplantibacillus plantarum (strain ATCC BAA-793 / NCIMB 8826 / WCFS1) (Lactobacillus plantarum) protein is Vinyl phenol reductase.